Reading from the N-terminus, the 691-residue chain is Histone-lysine N-methyltransferase Set8 (691 aa).

Residues 1 to 29 (MIMVRRRQRPAKEAASSSSGGASSGSGIP) are disordered. Low complexity predominate over residues 14–27 (AASSSSGGASSGSG). A phosphoserine mark is found at S195 and S250. At T252 the chain carries Phosphothreonine. S281 carries the post-translational modification Phosphoserine. 4 disordered regions span residues 341 to 363 (TANTESPAGQPRRRKPATPHRIL), 382 to 401 (GSADPLSPRKSPRKLPTTTA), 407 to 437 (KSRRRLNQPKPQAPYQPQLQKPPSQQQQQQQ), and 464 to 516 (AEER…ATNG). T344 is modified (phosphothreonine). Residues S346, S383, S388, and S392 each carry the phosphoserine modification. 2 stretches are compositionally biased toward polar residues: residues 421 to 430 (YQPQLQKPPS) and 471 to 481 (NKAPATANSNK). Positions 555 to 676 (DGLQVRHFMG…PGEELTYDYG (122 aa)) constitute an SET domain. Residues 565 to 567 (KGR), Y610, and 637 to 638 (NH) each bind S-adenosyl-L-methionine.

It belongs to the class V-like SAM-binding methyltransferase superfamily. Histone-lysine methyltransferase family. PR/SET subfamily.

The protein localises to the nucleus. Its subcellular location is the chromosome. The enzyme catalyses L-lysyl(20)-[histone H4] + S-adenosyl-L-methionine = N(6)-methyl-L-lysyl(20)-[histone H4] + S-adenosyl-L-homocysteine + H(+). Functionally, histone methyltransferase that specifically monomethylates 'Lys-20' of histone H4. H4 'Lys-20' monomethylation is enriched during mitosis and represents a specific tag for epigenetic transcriptional repression. Mainly functions in euchromatin regions, thereby playing a central role in the silencing of euchromatic genes. Required for cell proliferation, possibly by contributing to the maintenance of proper higher-order structure of DNA and chromosome condensation during mitosis. The protein is Histone-lysine N-methyltransferase Set8 of Drosophila melanogaster (Fruit fly).